A 156-amino-acid polypeptide reads, in one-letter code: Small ribosomal subunit protein uS7 (156 aa).

It belongs to the universal ribosomal protein uS7 family. As to quaternary structure, part of the 30S ribosomal subunit. Contacts proteins S9 and S11.

Functionally, one of the primary rRNA binding proteins, it binds directly to 16S rRNA where it nucleates assembly of the head domain of the 30S subunit. Is located at the subunit interface close to the decoding center, probably blocks exit of the E-site tRNA. This is Small ribosomal subunit protein uS7 from Clostridium beijerinckii (strain ATCC 51743 / NCIMB 8052) (Clostridium acetobutylicum).